A 317-amino-acid chain; its full sequence is Tegument protein UL14 homolog (317 aa).

The interval 166 to 291 (IAADPHSPRS…QKWLGGIPPL (126 aa)) is disordered. Residues 182 to 195 (KAPEDARCGARKPG) are compositionally biased toward basic and acidic residues. The span at 198-211 (NNYTPSAQPRSQET) shows a compositional bias: polar residues. Composition is skewed to basic and acidic residues over residues 217–236 (ASPDEGTRLGDRTRDLEHHS) and 249–265 (SERRRLGVVHQREKSSE).

It belongs to the alphaherpesvirinae HHV-1 UL14 protein family.

It localises to the virion tegument. Its subcellular location is the host cytoplasm. It is found in the host nucleus. Its function is as follows. Contributes to the nuclear transport of the viral transcriptional activator VP16 during the early phase of infection. Therefore, participates indirectly in the regulation of the immediate-early gene expression. Additionally, seems to be important for efficient nuclear targeting of capsids. In Equus caballus (Horse), this protein is Tegument protein UL14 homolog.